The following is a 123-amino-acid chain: Large ribosomal subunit protein uL18 (123 aa).

The protein belongs to the universal ribosomal protein uL18 family. Part of the 50S ribosomal subunit; part of the 5S rRNA/L5/L18/L25 subcomplex. Contacts the 5S and 23S rRNAs.

This is one of the proteins that bind and probably mediate the attachment of the 5S RNA into the large ribosomal subunit, where it forms part of the central protuberance. In Chlamydia abortus (strain DSM 27085 / S26/3) (Chlamydophila abortus), this protein is Large ribosomal subunit protein uL18.